A 406-amino-acid polypeptide reads, in one-letter code: Phosphoglycerate kinase (406 aa).

Substrate is bound by residues 22-24, arginine 37, 60-63, arginine 119, and arginine 152; these read DLN and HLGN. ATP contacts are provided by residues lysine 202, glutamate 325, and 355–358; that span reads GGDT.

The protein belongs to the phosphoglycerate kinase family. Monomer.

The protein resides in the cytoplasm. It carries out the reaction (2R)-3-phosphoglycerate + ATP = (2R)-3-phospho-glyceroyl phosphate + ADP. It participates in carbohydrate degradation; glycolysis; pyruvate from D-glyceraldehyde 3-phosphate: step 2/5. This is Phosphoglycerate kinase from Orientia tsutsugamushi (strain Ikeda) (Rickettsia tsutsugamushi).